Here is a 556-residue protein sequence, read N- to C-terminus: F-box protein YDR131C (556 aa).

One can recognise an F-box domain in the interval 1–44 (MFDKLPYEIFKQIAWRIPQEDKISLTYVCKRSYESIIPFIYQNL).

In terms of assembly, interacts with SKP1. Component of the probable SCF(YDR131C) complex containing CDC53, SKP1, RBX1 and YDR131C.

The protein localises to the vacuole. It participates in protein modification; protein ubiquitination. Substrate recognition component of a SCF (SKP1-CUL1-F-box protein) E3 ubiquitin-protein ligase complex which mediates the ubiquitination and subsequent proteasomal degradation of target proteins. Probably recognizes and binds to phosphorylated target proteins. This Saccharomyces cerevisiae (strain ATCC 204508 / S288c) (Baker's yeast) protein is F-box protein YDR131C.